Here is a 295-residue protein sequence, read N- to C-terminus: tRNA(Ile)-lysidine synthase (295 aa).

10–15 lines the ATP pocket; that stretch reads SGGPDS.

Belongs to the tRNA(Ile)-lysidine synthase family.

Its subcellular location is the cytoplasm. The catalysed reaction is cytidine(34) in tRNA(Ile2) + L-lysine + ATP = lysidine(34) in tRNA(Ile2) + AMP + diphosphate + H(+). Its function is as follows. Ligates lysine onto the cytidine present at position 34 of the AUA codon-specific tRNA(Ile) that contains the anticodon CAU, in an ATP-dependent manner. Cytidine is converted to lysidine, thus changing the amino acid specificity of the tRNA from methionine to isoleucine. The protein is tRNA(Ile)-lysidine synthase of Malacoplasma penetrans (strain HF-2) (Mycoplasma penetrans).